A 364-amino-acid chain; its full sequence is Chorismate synthase (364 aa).

Residue Arg47 participates in NADP(+) binding. FMN-binding positions include 125-127, Gly288, 303-307, and Arg329; these read RAS and KPTAT.

This sequence belongs to the chorismate synthase family. Homotetramer. FMNH2 is required as a cofactor.

The catalysed reaction is 5-O-(1-carboxyvinyl)-3-phosphoshikimate = chorismate + phosphate. The protein operates within metabolic intermediate biosynthesis; chorismate biosynthesis; chorismate from D-erythrose 4-phosphate and phosphoenolpyruvate: step 7/7. In terms of biological role, catalyzes the anti-1,4-elimination of the C-3 phosphate and the C-6 proR hydrogen from 5-enolpyruvylshikimate-3-phosphate (EPSP) to yield chorismate, which is the branch point compound that serves as the starting substrate for the three terminal pathways of aromatic amino acid biosynthesis. This reaction introduces a second double bond into the aromatic ring system. This Synechococcus sp. (strain CC9902) protein is Chorismate synthase.